A 286-amino-acid polypeptide reads, in one-letter code: Glycine--tRNA ligase alpha subunit (286 aa).

Belongs to the class-II aminoacyl-tRNA synthetase family. Tetramer of two alpha and two beta subunits.

It localises to the cytoplasm. The catalysed reaction is tRNA(Gly) + glycine + ATP = glycyl-tRNA(Gly) + AMP + diphosphate. This is Glycine--tRNA ligase alpha subunit (glyQ) from Thermotoga maritima (strain ATCC 43589 / DSM 3109 / JCM 10099 / NBRC 100826 / MSB8).